The chain runs to 405 residues: Maintenance of mitochondrial morphology protein 1 (405 aa).

Topologically, residues 1 to 86 (MQVLNFYVNP…TGSTKSFTQG (86 aa)) are lumenal. Residues 87–107 (LIIGQLSVIILLGIFIKFFVF) traverse the membrane as a helical segment. Residues 108 to 405 (ADSSTTSSTS…QPVSTTESDH (298 aa)) are Cytoplasmic-facing. One can recognise an SMP-LTD domain in the interval 166–385 (APESLDWFNV…EPRFQVVKLP (220 aa)). A disordered region spans residues 303 to 324 (SEPRVAMDSPQSTRDDNSEEPN).

This sequence belongs to the MMM1 family. Homodimer. Component of the ER-mitochondria encounter structure (ERMES) or MDM complex, composed of MMM1, MDM10, MDM12 and MDM34. An MMM1 homodimer associates with one molecule of MDM12 on each side in a pairwise head-to-tail manner, and the SMP-LTD domains of MMM1 and MDM12 generate a continuous hydrophobic tunnel for phospholipid trafficking.

It is found in the endoplasmic reticulum membrane. Functionally, component of the ERMES/MDM complex, which serves as a molecular tether to connect the endoplasmic reticulum (ER) and mitochondria. Components of this complex are involved in the control of mitochondrial shape and protein biogenesis, and function in nonvesicular lipid trafficking between the ER and mitochondria. The MDM12-MMM1 subcomplex functions in the major beta-barrel assembly pathway that is responsible for biogenesis of all outer membrane beta-barrel proteins, and acts in a late step after the SAM complex. The MDM10-MDM12-MMM1 subcomplex further acts in the TOM40-specific pathway after the action of the MDM12-MMM1 complex. Essential for establishing and maintaining the structure of mitochondria and maintenance of mtDNA nucleoids. This Meyerozyma guilliermondii (strain ATCC 6260 / CBS 566 / DSM 6381 / JCM 1539 / NBRC 10279 / NRRL Y-324) (Yeast) protein is Maintenance of mitochondrial morphology protein 1.